The primary structure comprises 1384 residues: Contactin-associated protein 1 (1384 aa).

A signal peptide spans 1 to 19 (MMHLRLFCILLAAVSGAEG). Over 20–1283 (WGYYGCDEEL…PYYHDEGWVA (1264 aa)) the chain is Extracellular. The 144-residue stretch at 25-168 (CDEELVGPLY…IGLRLGLYGC (144 aa)) folds into the F5/8 type C domain. A disulfide bridge links cysteine 25 with cysteine 168. N-linked (GlcNAc...) asparagine glycosylation is found at asparagine 120, asparagine 128, and asparagine 276. Laminin G-like domains follow at residues 203–355 (FKTE…AFRC) and 389–538 (FRTW…FDTC). A disulfide bond links cysteine 323 and cysteine 355. Residues asparagine 420, asparagine 499, and asparagine 518 are each glycosylated (N-linked (GlcNAc...) asparagine). Intrachain disulfides connect cysteine 506/cysteine 538, cysteine 544/cysteine 555, cysteine 549/cysteine 564, and cysteine 566/cysteine 576. Positions 540-577 (ITDRCSPNMCEHDGRCYQSWDDFICYCELTGYKGETCH) constitute an EGF-like 1 domain. One can recognise a Fibrinogen C-terminal domain in the interval 576–795 (CHTPLYKESC…NTISFHTGAA (220 aa)). N-linked (GlcNAc...) asparagine glycans are attached at residues asparagine 597, asparagine 653, asparagine 664, asparagine 763, asparagine 804, asparagine 843, asparagine 860, asparagine 948, and asparagine 956. One can recognise a Laminin G-like 3 domain in the interval 813-956 (FRTSAPSGVF…ANASEGTSPN (144 aa)). 4 cysteine pairs are disulfide-bonded: cysteine 930–cysteine 957, cysteine 961–cysteine 974, cysteine 968–cysteine 983, and cysteine 985–cysteine 995. Residues 957 to 996 (CTGHCAHPRLPCFHGGRCVERYSYYTCDCDLTAFDGPYCN) form the EGF-like 2 domain. 2 N-linked (GlcNAc...) asparagine glycosylation sites follow: asparagine 1078 and asparagine 1147. Positions 1088–1250 (FSTSSAPAVL…VQGELSESNC (163 aa)) constitute a Laminin G-like 4 domain. Residues cysteine 1209 and cysteine 1250 are joined by a disulfide bond. A helical transmembrane segment spans residues 1284–1304 (ILLGFLVAFLLLGLVGMLVLF). Residues 1305 to 1384 (YLQNHRYKGS…PQILEESRSE (80 aa)) lie on the Cytoplasmic side of the membrane. The span at 1319-1328 (EPKAAHEYHP) shows a compositional bias: basic and acidic residues. The segment at 1319 to 1384 (EPKAAHEYHP…PQILEESRSE (66 aa)) is disordered. Residues 1328-1369 (PGSKPPLPTSGPAQVPTPTAAPNQAPASAPAPAPTPAPAPGP) carry the SH3-binding motif. Low complexity predominate over residues 1339–1355 (PAQVPTPTAAPNQAPAS). Over residues 1356–1368 (APAPAPTPAPAPG) the composition is skewed to pro residues. Phosphoserine is present on serine 1383.

It belongs to the neurexin family. Interacts with CNTN1/contactin in cis form. Predominantly expressed in brain. Weak expression detected in ovary, pancreas, colon, lung, heart, intestine and testis.

The protein resides in the membrane. It localises to the cell junction. Its subcellular location is the paranodal septate junction. Required, with CNTNAP2, for radial and longitudinal organization of myelinated axons. Plays a role in the formation of functional distinct domains critical for saltatory conduction of nerve impulses in myelinated nerve fibers. Demarcates the paranodal region of the axo-glial junction. In association with contactin involved in the signaling between axons and myelinating glial cells. The chain is Contactin-associated protein 1 (CNTNAP1) from Homo sapiens (Human).